We begin with the raw amino-acid sequence, 388 residues long: Putative nickel insertion protein (388 aa).

The protein belongs to the LarC family.

This Geobacter sulfurreducens (strain ATCC 51573 / DSM 12127 / PCA) protein is Putative nickel insertion protein.